The primary structure comprises 132 residues: Small ribosomal subunit protein uS8 (132 aa).

The protein belongs to the universal ribosomal protein uS8 family. In terms of assembly, part of the 30S ribosomal subunit. Contacts proteins S5 and S12.

Functionally, one of the primary rRNA binding proteins, it binds directly to 16S rRNA central domain where it helps coordinate assembly of the platform of the 30S subunit. The polypeptide is Small ribosomal subunit protein uS8 (Rhodospirillum centenum (strain ATCC 51521 / SW)).